Reading from the N-terminus, the 280-residue chain is uncharacterized protein (280 aa).

The N-terminal 51 residues, 1–51, are a transit peptide targeting the chloroplast; that stretch reads MATSLLLRHSSAVFFSQSSFFTKNKSFRSFTSIKMEKGEAENAVKTKKVFV.

Belongs to the NAD(P)-dependent epimerase/dehydratase family.

It localises to the plastid. The protein resides in the chloroplast. Its subcellular location is the plastoglobule. This is an uncharacterized protein from Arabidopsis thaliana (Mouse-ear cress).